The sequence spans 295 residues: Pyridoxal 5'-phosphate synthase subunit PdxS (295 aa).

Residue aspartate 25 participates in D-ribose 5-phosphate binding. Residue lysine 82 is the Schiff-base intermediate with D-ribose 5-phosphate of the active site. Glycine 154 is a binding site for D-ribose 5-phosphate. Arginine 166 contacts D-glyceraldehyde 3-phosphate. Residues glycine 215 and 236 to 237 (GS) each bind D-ribose 5-phosphate.

It belongs to the PdxS/SNZ family. In terms of assembly, in the presence of PdxT, forms a dodecamer of heterodimers.

It catalyses the reaction aldehydo-D-ribose 5-phosphate + D-glyceraldehyde 3-phosphate + L-glutamine = pyridoxal 5'-phosphate + L-glutamate + phosphate + 3 H2O + H(+). It functions in the pathway cofactor biosynthesis; pyridoxal 5'-phosphate biosynthesis. Functionally, catalyzes the formation of pyridoxal 5'-phosphate from ribose 5-phosphate (RBP), glyceraldehyde 3-phosphate (G3P) and ammonia. The ammonia is provided by the PdxT subunit. Can also use ribulose 5-phosphate and dihydroxyacetone phosphate as substrates, resulting from enzyme-catalyzed isomerization of RBP and G3P, respectively. This Bacillus cereus (strain 03BB102) protein is Pyridoxal 5'-phosphate synthase subunit PdxS.